A 441-amino-acid chain; its full sequence is BTB/POZ domain-containing protein At3g05675 (441 aa).

In terms of domain architecture, BTB spans 20–98 (SDIVVRLRNE…LYVVSDDVHE (79 aa)).

It participates in protein modification; protein ubiquitination. In terms of biological role, may act as a substrate-specific adapter of an E3 ubiquitin-protein ligase complex (CUL3-RBX1-BTB) which mediates the ubiquitination and subsequent proteasomal degradation of target proteins. In Arabidopsis thaliana (Mouse-ear cress), this protein is BTB/POZ domain-containing protein At3g05675.